Here is a 608-residue protein sequence, read N- to C-terminus: Phosphoenolpyruvate carboxykinase [GTP] (608 aa).

Substrate contacts are provided by residues Arg-82 and Tyr-222–Gly-224. 2 residues coordinate Mn(2+): Lys-231 and His-251. Ser-273 serves as a coordination point for substrate. Ala-274–Asn-279 contacts GTP. Cys-275 is a catalytic residue. Asp-298 lines the Mn(2+) pocket. Asn-389–Arg-391 is a binding site for substrate. GTP-binding positions include Arg-391, Arg-422, and Phe-517–Asn-520.

Belongs to the phosphoenolpyruvate carboxykinase [GTP] family. Monomer. Requires Mn(2+) as cofactor.

It is found in the cytoplasm. The enzyme catalyses oxaloacetate + GTP = phosphoenolpyruvate + GDP + CO2. The protein operates within carbohydrate biosynthesis; gluconeogenesis. Functionally, catalyzes the conversion of oxaloacetate (OAA) to phosphoenolpyruvate (PEP), the rate-limiting step in the metabolic pathway that produces glucose from lactate and other precursors derived from the citric acid cycle. The chain is Phosphoenolpyruvate carboxykinase [GTP] from Paenarthrobacter aurescens (strain TC1).